Here is a 171-residue protein sequence, read N- to C-terminus: uncharacterized protein (171 aa).

The region spanning 3-171 (KKVAIILANE…FNREIVKQLQ (169 aa)) is the PfpI endopeptidase domain.

This sequence belongs to the peptidase C56 family.

This is an uncharacterized protein from Staphylococcus aureus (strain MRSA252).